The chain runs to 347 residues: CCN family member 2 (347 aa).

The signal sequence occupies residues 1–24 (MLASVAGPVSLALVLLLCTRPATG). The region spanning 25-96 (QDCSAQCQCA…NRKIGVCTAK (72 aa)) is the IGFBP N-terminal domain. Intrachain disulfides connect Cys-27–Cys-52, Cys-31–Cys-54, Cys-33–Cys-55, Cys-41–Cys-58, Cys-66–Cys-80, and Cys-72–Cys-93. The 67-residue stretch at 99–165 (APCVFGGSVY…GKCCEEWVCD (67 aa)) folds into the VWFC domain. Residues 196 to 241 (NCLVQTTEWSACSKTCGMGISTRVTNDNTFCRLEKQSRLCMVRPCE) enclose the TSP type-1 domain. Positions 245-347 (EENIKKGKKC…YYRKMYGDMA (103 aa)) are heparin-binding. 5 disulfides stabilise this stretch: Cys-254-Cys-291, Cys-271-Cys-305, Cys-282-Cys-321, Cys-285-Cys-323, and Cys-290-Cys-327. Residues 254–328 (CIRTPKIAKP…KTCACHYNCP (75 aa)) form the CTCK domain.

The protein belongs to the CCN family. As to quaternary structure, monomer. Interacts with TSKU.

The protein resides in the secreted. It localises to the extracellular space. Its subcellular location is the extracellular matrix. In terms of biological role, major connective tissue mitoattractant secreted by vascular endothelial cells. Promotes proliferation and differentiation of chondrocytes. Is involved in the stimulation of osteoblast differentiation and has a critical role in osteogenesis. Mediates heparin- and divalent cation-dependent cell adhesion in many cell types including fibroblasts, myofibroblasts, endothelial and epithelial cells. Enhances fibroblast growth factor-induced DNA synthesis. The protein is CCN family member 2 of Rattus norvegicus (Rat).